A 655-amino-acid polypeptide reads, in one-letter code: Macrolide export ATP-binding/permease protein MacB (655 aa).

Residues 6 to 244 (IELRDVWREF…DALAGDEGPE (239 aa)) form the ABC transporter domain. ATP is bound at residue 42–49 (GASGSGKS). A disordered region spans residues 225-252 (DQARPDAPPLDALAGDEGPEAPRPAPQP). 4 consecutive transmembrane segments (helical) span residues 280–300 (LTMLGIIIGIAAVVSVVALGA), 527–547 (LTLLVSMIAVISLVVVGIGVM), 583–603 (VLVCLIGGVLGILLSLSIGVL), and 620–640 (SMVLAFVCSTLIGVAFGFLPA).

This sequence belongs to the ABC transporter superfamily. Macrolide exporter (TC 3.A.1.122) family. Homodimer.

The protein localises to the cell inner membrane. Functionally, non-canonical ABC transporter that contains transmembrane domains (TMD), which form a pore in the inner membrane, and an ATP-binding domain (NBD), which is responsible for energy generation. Confers resistance against macrolides. The chain is Macrolide export ATP-binding/permease protein MacB from Bordetella avium (strain 197N).